Consider the following 308-residue polypeptide: Protein translocase subunit SecF (308 aa).

The next 6 helical transmembrane spans lie at 23 to 42 (VSYS…IGIY), 140 to 160 (IEAG…YIGV), 164 to 184 (WYFG…ALGF), 194 to 214 (LSTI…SVVI), 246 to 266 (ILTV…GGKA), and 272 to 292 (VLVF…SAPI).

It belongs to the SecD/SecF family. SecF subfamily. In terms of assembly, forms a complex with SecD. Part of the essential Sec protein translocation apparatus which comprises SecA, SecYEG and auxiliary proteins SecDF-YajC and YidC.

It is found in the cell inner membrane. Part of the Sec protein translocase complex. Interacts with the SecYEG preprotein conducting channel. SecDF uses the proton motive force (PMF) to complete protein translocation after the ATP-dependent function of SecA. In Rickettsia typhi (strain ATCC VR-144 / Wilmington), this protein is Protein translocase subunit SecF.